A 478-amino-acid chain; its full sequence is Aspartyl/glutamyl-tRNA(Asn/Gln) amidotransferase subunit B 1 (478 aa).

It belongs to the GatB/GatE family. GatB subfamily. As to quaternary structure, heterotrimer of A, B and C subunits.

The enzyme catalyses L-glutamyl-tRNA(Gln) + L-glutamine + ATP + H2O = L-glutaminyl-tRNA(Gln) + L-glutamate + ADP + phosphate + H(+). It carries out the reaction L-aspartyl-tRNA(Asn) + L-glutamine + ATP + H2O = L-asparaginyl-tRNA(Asn) + L-glutamate + ADP + phosphate + 2 H(+). Allows the formation of correctly charged Asn-tRNA(Asn) or Gln-tRNA(Gln) through the transamidation of misacylated Asp-tRNA(Asn) or Glu-tRNA(Gln) in organisms which lack either or both of asparaginyl-tRNA or glutaminyl-tRNA synthetases. The reaction takes place in the presence of glutamine and ATP through an activated phospho-Asp-tRNA(Asn) or phospho-Glu-tRNA(Gln). This Syntrophus aciditrophicus (strain SB) protein is Aspartyl/glutamyl-tRNA(Asn/Gln) amidotransferase subunit B 1.